We begin with the raw amino-acid sequence, 648 residues long: Transcription termination factor FttA (648 aa).

The KHa stretch occupies residues 9 to 76; sequence DDILKEIREI…ISVRPDPDIL (68 aa). The interval 77–144 is KHb; that stretch reads LPPEKAEELI…WAPRVVRTPP (68 aa). The segment at 185 to 395 is metallo-beta-lactamase N-terminus; it reads WIRITGLGGF…LVMESTYGGS (211 aa). Residues H253, H255, D257, H258, H341, and D364 each coordinate Zn(2+). A beta-Casp region spans residues 396–589; it reads NDYQMPREEA…MEVHTIDGFS (194 aa). Residues 590–648 are metallo-beta-lactamase C-terminus; that stretch reads GHADRRELMSYVARVRPRPERIITVHGEAHKCLDLSSSIHKKFGISTRAPNNLDAIRLK. H615 provides a ligand contact to Zn(2+).

It belongs to the metallo-beta-lactamase superfamily. RNA-metabolizing metallo-beta-lactamase-like family. FttA subfamily. As to quaternary structure, homodimer. Probably interacts transiently with RNA polymerase (RNAP), (via at least the RNAP stalk subunits Rpo4 and Rpo7), interacts transiently with the Spt4-Spt5 complex. Requires Zn(2+) as cofactor.

Transcription termination is stimulated by the Spt4-Spt5 complex. Dipicolinic acid inhibits FttA-mediated termination in vitro and inhibits growth in vivo. In terms of biological role, terminates transcription on the whole genome. Termination is linked to FttA-mediated RNA cleavage and does not require NTP hydrolysis. Cleaves endonucleolytically at the RNA exit channel of RNA polymerase (RNAP); the 5'-3' exonuclease activity of this protein degrades the nascent RNA released from RNAP. Facilitates transcription termination; addition of this factor to stalled transcription elongation complexes (TEC) promotes nascent transcript cleavage and releases RNA polymerase (RNAP) from DNA in vitro. Transcription termination competes with productive transcription elongation. Termination is stimulated by C-rich transcripts and inhibited by G-rich transcripts; the Spt4-Spt5 complex enhances termination on C-less transcripts. Yields an approximately 100 nucleotide RNA, consistent with endonucleolytic cleavage at the RNA exit channel of RNAP. In Thermococcus kodakarensis (strain ATCC BAA-918 / JCM 12380 / KOD1) (Pyrococcus kodakaraensis (strain KOD1)), this protein is Transcription termination factor FttA.